Consider the following 476-residue polypeptide: Eukaryotic translation initiation factor 3 subunit L (476 aa).

Positions 257 to 452 constitute a PCI domain; the sequence is DAIRMFSHIL…DLDYALENDL (196 aa).

It belongs to the eIF-3 subunit L family. In terms of assembly, component of the eukaryotic translation initiation factor 3 (eIF-3) complex.

It localises to the cytoplasm. Component of the eukaryotic translation initiation factor 3 (eIF-3) complex, which is involved in protein synthesis of a specialized repertoire of mRNAs and, together with other initiation factors, stimulates binding of mRNA and methionyl-tRNAi to the 40S ribosome. The eIF-3 complex specifically targets and initiates translation of a subset of mRNAs involved in cell proliferation. This Aspergillus oryzae (strain ATCC 42149 / RIB 40) (Yellow koji mold) protein is Eukaryotic translation initiation factor 3 subunit L.